Here is a 301-residue protein sequence, read N- to C-terminus: Oxygen-dependent coproporphyrinogen-III oxidase (301 aa).

Position 92 (serine 92) interacts with substrate. Histidine 96 and histidine 106 together coordinate a divalent metal cation. Histidine 106 (proton donor) is an active-site residue. 108–110 (NVR) lines the substrate pocket. Positions 145 and 175 each coordinate a divalent metal cation. The segment at 240 to 275 (YVEFNLVWDRGTLFGLQTGGRTESILMSMPPLVRWE) is important for dimerization. 258 to 260 (GGR) lines the substrate pocket.

This sequence belongs to the aerobic coproporphyrinogen-III oxidase family. In terms of assembly, homodimer. It depends on a divalent metal cation as a cofactor.

The protein resides in the cytoplasm. The enzyme catalyses coproporphyrinogen III + O2 + 2 H(+) = protoporphyrinogen IX + 2 CO2 + 2 H2O. The protein operates within porphyrin-containing compound metabolism; protoporphyrin-IX biosynthesis; protoporphyrinogen-IX from coproporphyrinogen-III (O2 route): step 1/1. Its function is as follows. Involved in the heme biosynthesis. Catalyzes the aerobic oxidative decarboxylation of propionate groups of rings A and B of coproporphyrinogen-III to yield the vinyl groups in protoporphyrinogen-IX. The sequence is that of Oxygen-dependent coproporphyrinogen-III oxidase from Cronobacter sakazakii (strain ATCC BAA-894) (Enterobacter sakazakii).